We begin with the raw amino-acid sequence, 200 residues long: UPF0301 protein Veis_1517 (200 aa).

It belongs to the UPF0301 (AlgH) family.

This is UPF0301 protein Veis_1517 from Verminephrobacter eiseniae (strain EF01-2).